The chain runs to 487 residues: GTPase Der (487 aa).

2 EngA-type G domains span residues 3–166 (PVVA…AEAM) and 199–372 (IKLA…DSAT). GTP contacts are provided by residues 9 to 16 (GRPNVGKS), 56 to 60 (DTGGI), 118 to 121 (NKID), 205 to 212 (GKPNVGKS), 252 to 256 (DTAGV), and 317 to 320 (NKWD). The 85-residue stretch at 373 to 457 (RRVSTSMLTR…PIQLRFQEGD (85 aa)) folds into the KH-like domain.

Belongs to the TRAFAC class TrmE-Era-EngA-EngB-Septin-like GTPase superfamily. EngA (Der) GTPase family. As to quaternary structure, associates with the 50S ribosomal subunit.

Functionally, GTPase that plays an essential role in the late steps of ribosome biogenesis. The sequence is that of GTPase Der from Shewanella oneidensis (strain ATCC 700550 / JCM 31522 / CIP 106686 / LMG 19005 / NCIMB 14063 / MR-1).